The primary structure comprises 155 residues: Small ribosomal subunit protein uS7cz/uS7cy (155 aa).

The protein belongs to the universal ribosomal protein uS7 family. Part of the 30S ribosomal subunit.

It localises to the plastid. The protein localises to the chloroplast. Functionally, one of the primary rRNA binding proteins, it binds directly to 16S rRNA where it nucleates assembly of the head domain of the 30S subunit. This Vitis vinifera (Grape) protein is Small ribosomal subunit protein uS7cz/uS7cy (rps7-A).